The sequence spans 900 residues: Xylanolytic transcriptional activator xlnR (900 aa).

The segment covering 53-71 (SREGGNSENNSTFKPSSVR) has biased composition (polar residues). The disordered stretch occupies residues 53–75 (SREGGNSENNSTFKPSSVRDSLA). Positions 98–124 (CDQCNQLRTKCDGQNPCAHCIEFGLTC) form a DNA-binding region, zn(2)-C6 fungal-type. Disordered stretches follow at residues 137-169 (SKKDIAAAAAAAGHQGGMGNRSPTDRRLSQEPG), 520-559 (ELPPNASQPGQDGERENEGDNPSKRNQSLHGGNSNVNVTE), and 701-722 (EPPENPHIDHLSPSGRSSSTVG). Residues 531–542 (DGERENEGDNPS) show a composition bias toward basic and acidic residues. Polar residues predominate over residues 543–557 (KRNQSLHGGNSNVNV). The segment covering 712-722 (SPSGRSSSTVG) has biased composition (low complexity).

This sequence belongs to the xlnR/xlr1 family.

The protein resides in the nucleus. Functionally, transcriptional activator of the xylanolytic system. Involved in the regulation of extracellular cellulolytic and xylanolytic genes and in the regulation of the intracellular activities of D-xylose catabolic genes in the pentose catabolic pathway (PCP) in response to the presence of D-xylose. Binds to the DNA sequence 5'-GGNTAAA-3'. This is Xylanolytic transcriptional activator xlnR (xlnR) from Emericella nidulans (strain FGSC A4 / ATCC 38163 / CBS 112.46 / NRRL 194 / M139) (Aspergillus nidulans).